A 263-amino-acid chain; its full sequence is Small ribosomal subunit protein uS3 (263 aa).

Residues 40–108 (IRNYLFKKFH…HIKVDVDVLE (69 aa)) enclose the KH type-2 domain. Residues 224–263 (KPKGSEANHQRRNSNKSKDYRDNKNKQFNKNHQNQQPAKE) are disordered. The segment covering 239-248 (KSKDYRDNKN) has biased composition (basic and acidic residues). The span at 249–263 (KQFNKNHQNQQPAKE) shows a compositional bias: low complexity.

It belongs to the universal ribosomal protein uS3 family. As to quaternary structure, part of the 30S ribosomal subunit. Forms a tight complex with proteins S10 and S14.

Binds the lower part of the 30S subunit head. Binds mRNA in the 70S ribosome, positioning it for translation. In Mycoplasmoides gallisepticum (strain R(low / passage 15 / clone 2)) (Mycoplasma gallisepticum), this protein is Small ribosomal subunit protein uS3.